The primary structure comprises 184 residues: ATP synthase subunit delta (184 aa).

Belongs to the ATPase delta chain family. In terms of assembly, F-type ATPases have 2 components, F(1) - the catalytic core - and F(0) - the membrane proton channel. F(1) has five subunits: alpha(3), beta(3), gamma(1), delta(1), epsilon(1). F(0) has three main subunits: a(1), b(2) and c(10-14). The alpha and beta chains form an alternating ring which encloses part of the gamma chain. F(1) is attached to F(0) by a central stalk formed by the gamma and epsilon chains, while a peripheral stalk is formed by the delta and b chains.

Its subcellular location is the cell inner membrane. Functionally, f(1)F(0) ATP synthase produces ATP from ADP in the presence of a proton or sodium gradient. F-type ATPases consist of two structural domains, F(1) containing the extramembraneous catalytic core and F(0) containing the membrane proton channel, linked together by a central stalk and a peripheral stalk. During catalysis, ATP synthesis in the catalytic domain of F(1) is coupled via a rotary mechanism of the central stalk subunits to proton translocation. In terms of biological role, this protein is part of the stalk that links CF(0) to CF(1). It either transmits conformational changes from CF(0) to CF(1) or is implicated in proton conduction. The polypeptide is ATP synthase subunit delta (Zymomonas mobilis subsp. mobilis (strain ATCC 31821 / ZM4 / CP4)).